Here is a 334-residue protein sequence, read N- to C-terminus: Protein-methionine-sulfoxide reductase catalytic subunit MsrP (334 aa).

The tat-type signal signal peptide spans 1-44 (MKKIRPLTEADVTAESAFFMQRRQVLKALGISAAALSLPSTAQA). Residues N88, 91-92 (YE), C146, T181, N233, R238, and 249-251 (GIK) contribute to the Mo-molybdopterin site.

It belongs to the MsrP family. As to quaternary structure, heterodimer of a catalytic subunit (MsrP) and a heme-binding subunit (MsrQ). Mo-molybdopterin serves as cofactor. In terms of processing, predicted to be exported by the Tat system. The position of the signal peptide cleavage has not been experimentally proven.

Its subcellular location is the periplasm. The enzyme catalyses L-methionyl-[protein] + a quinone + H2O = L-methionyl-(S)-S-oxide-[protein] + a quinol. It carries out the reaction L-methionyl-[protein] + a quinone + H2O = L-methionyl-(R)-S-oxide-[protein] + a quinol. Its function is as follows. Part of the MsrPQ system that repairs oxidized periplasmic proteins containing methionine sulfoxide residues (Met-O), using respiratory chain electrons. Thus protects these proteins from oxidative-stress damage caused by reactive species of oxygen and chlorine generated by the host defense mechanisms. MsrPQ is essential for the maintenance of envelope integrity under bleach stress, rescuing a wide series of structurally unrelated periplasmic proteins from methionine oxidation, including the primary periplasmic chaperone SurA and the lipoprotein Pal. The catalytic subunit MsrP is non-stereospecific, being able to reduce both (R-) and (S-) diastereoisomers of methionine sulfoxide. The sequence is that of Protein-methionine-sulfoxide reductase catalytic subunit MsrP from Salmonella newport (strain SL254).